A 347-amino-acid chain; its full sequence is NADH-ubiquinone oxidoreductase chain 2 (347 aa).

11 helical membrane-spanning segments follow: residues 3–23 (PPILITIMLTVVSGTMIVLTS), 25–45 (HWLTVWIGFEMNMLAIIPILM), 59–79 (YLLTQATASMILMMGVAIDLL), 96–116 (AMMTIALAMKLGLAPFHFWVP), 122–142 (IHMSSGLILLTWQKIAPLSIL), 149–169 (INPNLLLPMAIASVLIGGWGG), 178–198 (ILAYSSIAHMGWMAAITLYNP), 200–220 (MMILNLTIYIIMTSTTFMLFM), 237–257 (APLITSLILMLMLSLGGLPPL), 274–294 (EMIIVPTLLAMTALLNLYFYM), and 325–345 (LLSPLIVVSTMLLPITPLLSI).

Belongs to the complex I subunit 2 family. Core subunit of respiratory chain NADH dehydrogenase (Complex I) which is composed of 45 different subunits. Interacts with TMEM242.

It localises to the mitochondrion inner membrane. It catalyses the reaction a ubiquinone + NADH + 5 H(+)(in) = a ubiquinol + NAD(+) + 4 H(+)(out). Core subunit of the mitochondrial membrane respiratory chain NADH dehydrogenase (Complex I) which catalyzes electron transfer from NADH through the respiratory chain, using ubiquinone as an electron acceptor. Essential for the catalytic activity and assembly of complex I. The sequence is that of NADH-ubiquinone oxidoreductase chain 2 from Cynictis penicillata (Yellow mongoose).